Consider the following 335-residue polypeptide: N-acetylmuramoyl-L-alanine amidase sle1 (335 aa).

The signal sequence occupies residues 1-25; sequence MQKKVIAAIIGTSAISAVAATQANA. The LysM 1 domain maps to 27–70; it reads TTHTVKPGESVWAISNKYGISIAKLKSLNNLTSNLIFPNQVLKV. Positions 71 to 86 are enriched in low complexity; the sequence is SGSSNSTSNSSRPSTN. The interval 71 to 90 is disordered; sequence SGSSNSTSNSSRPSTNSGGG. LysM domains lie at 91 to 134 and 158 to 201; these read SYYT…KLKV. The 125-residue stretch at 211-335 folds into the Peptidase C51 domain; the sequence is ASATTTNRGY…YQVNNYRYIH (125 aa).

It is found in the secreted. Its subcellular location is the cell surface. It catalyses the reaction Hydrolyzes the link between N-acetylmuramoyl residues and L-amino acid residues in certain cell-wall glycopeptides.. Functionally, peptidoglycan hydrolase involved in the splitting of the septum during cell division. The chain is N-acetylmuramoyl-L-alanine amidase sle1 (sle1) from Staphylococcus aureus (strain bovine RF122 / ET3-1).